Reading from the N-terminus, the 198-residue chain is Glycerol-3-phosphate acyltransferase (198 aa).

The next 4 helical transmembrane spans lie at 3-23, 81-101, 113-133, and 153-175; these read VEWL…AVIV, LFAA…FFQF, VLLG…IGVA, and YVWL…MLLV.

Belongs to the PlsY family. As to quaternary structure, probably interacts with PlsX.

It is found in the cell inner membrane. The enzyme catalyses an acyl phosphate + sn-glycerol 3-phosphate = a 1-acyl-sn-glycero-3-phosphate + phosphate. It participates in lipid metabolism; phospholipid metabolism. Catalyzes the transfer of an acyl group from acyl-phosphate (acyl-PO(4)) to glycerol-3-phosphate (G3P) to form lysophosphatidic acid (LPA). This enzyme utilizes acyl-phosphate as fatty acyl donor, but not acyl-CoA or acyl-ACP. This is Glycerol-3-phosphate acyltransferase from Methylococcus capsulatus (strain ATCC 33009 / NCIMB 11132 / Bath).